Consider the following 203-residue polypeptide: Urease accessory protein UreG (203 aa).

Residue 10 to 17 participates in GTP binding; the sequence is GPVGAGKT.

The protein belongs to the SIMIBI class G3E GTPase family. UreG subfamily. Homodimer. UreD, UreF and UreG form a complex that acts as a GTP-hydrolysis-dependent molecular chaperone, activating the urease apoprotein by helping to assemble the nickel containing metallocenter of UreC. The UreE protein probably delivers the nickel.

It is found in the cytoplasm. Its function is as follows. Facilitates the functional incorporation of the urease nickel metallocenter. This process requires GTP hydrolysis, probably effectuated by UreG. This Lachnoclostridium phytofermentans (strain ATCC 700394 / DSM 18823 / ISDg) (Clostridium phytofermentans) protein is Urease accessory protein UreG.